Reading from the N-terminus, the 332-residue chain is Fructose-1,6-bisphosphatase class 1 1 (332 aa).

Residues E92, D115, L117, and D118 each coordinate Mg(2+). Substrate is bound by residues 118–121, N211, Y244, 262–264, and K274; these read DGSS and YLY. Residue E280 participates in Mg(2+) binding.

This sequence belongs to the FBPase class 1 family. In terms of assembly, homotetramer. Requires Mg(2+) as cofactor.

Its subcellular location is the cytoplasm. It catalyses the reaction beta-D-fructose 1,6-bisphosphate + H2O = beta-D-fructose 6-phosphate + phosphate. Its pathway is carbohydrate biosynthesis; gluconeogenesis. The polypeptide is Fructose-1,6-bisphosphatase class 1 1 (Christiangramia forsetii (strain DSM 17595 / CGMCC 1.15422 / KT0803) (Gramella forsetii)).